A 232-amino-acid chain; its full sequence is MAIDLGCHVGCASPETKQEETADPTAAPVVVDDVEAAAGGRRPGDGGGVNYVARAQWLRAAVLGANDGLVSVASLMVGVGAANGTRRAMLVSGLAGLVAGACSMAIGEFVSVYAQCDIQAAQIERARGGKDADGGEEEEELPSPTMAAVASALSFAAGAALPLLAGGFVRPWAARVAAVCAASSLGLAGFGVASAYLGGAGVARSGVRMLVGGWLAMAVTYGVLKLFGMHGV.

Over 1–59 (MAIDLGCHVGCASPETKQEETADPTAAPVVVDDVEAAAGGRRPGDGGGVNYVARAQWLR) the chain is Cytoplasmic. A helical membrane pass occupies residues 60-80 (AAVLGANDGLVSVASLMVGVG). Topologically, residues 81-89 (AANGTRRAM) are vacuolar. A helical transmembrane segment spans residues 90 to 110 (LVSGLAGLVAGACSMAIGEFV). At 111-148 (SVYAQCDIQAAQIERARGGKDADGGEEEEELPSPTMAA) the chain is on the cytoplasmic side. The helical transmembrane segment at 149-169 (VASALSFAAGAALPLLAGGFV) threads the bilayer. Over 170–175 (RPWAAR) the chain is Vacuolar. The helical transmembrane segment at 176–196 (VAAVCAASSLGLAGFGVASAY) threads the bilayer. The Cytoplasmic segment spans residues 197–208 (LGGAGVARSGVR). A helical transmembrane segment spans residues 209–229 (MLVGGWLAMAVTYGVLKLFGM). The Vacuolar portion of the chain corresponds to 230-232 (HGV).

It belongs to the CCC1 family.

It localises to the vacuole membrane. It carries out the reaction Fe(2+)(in) = Fe(2+)(out). Probable vacuolar iron transporter that may be involved in the regulation of iron distribution throughout the plant. The polypeptide is Vacuolar iron transporter homolog 1 (Oryza sativa subsp. japonica (Rice)).